Here is a 193-residue protein sequence, read N- to C-terminus: Imidazoleglycerol-phosphate dehydratase (193 aa).

This sequence belongs to the imidazoleglycerol-phosphate dehydratase family.

The protein localises to the cytoplasm. The enzyme catalyses D-erythro-1-(imidazol-4-yl)glycerol 3-phosphate = 3-(imidazol-4-yl)-2-oxopropyl phosphate + H2O. Its pathway is amino-acid biosynthesis; L-histidine biosynthesis; L-histidine from 5-phospho-alpha-D-ribose 1-diphosphate: step 6/9. This is Imidazoleglycerol-phosphate dehydratase from Saccharolobus islandicus (strain Y.N.15.51 / Yellowstone #2) (Sulfolobus islandicus).